The chain runs to 541 residues: Chaperonin GroEL 2 (541 aa).

ATP-binding positions include Thr29 to Pro32, Asp86 to Thr90, Gly413, Asn476 to Ala478, and Asp492.

Belongs to the chaperonin (HSP60) family. In terms of assembly, forms a cylinder of 14 subunits composed of two heptameric rings stacked back-to-back. Interacts with the co-chaperonin GroES.

The protein localises to the cytoplasm. The enzyme catalyses ATP + H2O + a folded polypeptide = ADP + phosphate + an unfolded polypeptide.. Functionally, together with its co-chaperonin GroES, plays an essential role in assisting protein folding. The GroEL-GroES system forms a nano-cage that allows encapsulation of the non-native substrate proteins and provides a physical environment optimized to promote and accelerate protein folding. In Streptomyces coelicolor (strain ATCC BAA-471 / A3(2) / M145), this protein is Chaperonin GroEL 2.